Consider the following 88-residue polypeptide: Beta-insect excitatory toxin 2 (88 aa).

The first 18 residues, 1-18 (MKFLLLFLVVLPIMGVLG), serve as a signal peptide directing secretion. In terms of domain architecture, LCN-type CS-alpha/beta spans 20 to 83 (KNGYAVDSSG…ISDTRKSYCD (64 aa)). Disulfide bonds link cysteine 34-cysteine 55, cysteine 40-cysteine 60, cysteine 44-cysteine 62, and cysteine 56-cysteine 82.

This sequence belongs to the long (4 C-C) scorpion toxin superfamily. Sodium channel inhibitor family. Beta subfamily. Expressed by the venom gland.

Its subcellular location is the secreted. Its function is as follows. Excitatory insect beta-toxins induce a spastic paralysis. They bind voltage-independently at site-4 of sodium channels (Nav) and shift the voltage of activation toward more negative potentials thereby affecting sodium channel activation and promoting spontaneous and repetitive firing. This toxin is active only on insects. The sequence is that of Beta-insect excitatory toxin 2 from Androctonus australis (Sahara scorpion).